Here is a 553-residue protein sequence, read N- to C-terminus: Glutamine--tRNA ligase (553 aa).

The short motif at 34 to 44 (PEPNGYLHIGH) is the 'HIGH' region element. ATP is bound by residues 35-37 (EPN) and 41-47 (HIGHAKS). Residues D67 and Y212 each contribute to the L-glutamine site. Residues T231, 261–262 (RL), and 269–271 (MSK) each bind ATP. The short motif at 268 to 272 (IMSKR) is the 'KMSKS' region element.

It belongs to the class-I aminoacyl-tRNA synthetase family. As to quaternary structure, monomer.

It is found in the cytoplasm. It carries out the reaction tRNA(Gln) + L-glutamine + ATP = L-glutaminyl-tRNA(Gln) + AMP + diphosphate. The protein is Glutamine--tRNA ligase of Tolumonas auensis (strain DSM 9187 / NBRC 110442 / TA 4).